Here is a 196-residue protein sequence, read N- to C-terminus: ECF RNA polymerase sigma factor SigK (196 aa).

The interval 39 to 105 (YDQTRARVYG…RAVDRVRSEQ (67 aa)) is sigma-70 factor domain-2. The short motif at 62–65 (ETTQ) is the Polymerase core binding element. The interval 142–191 (CLDSLTDVQRECIQLAYYDGLTYAQVADRLAANLATIKSRMRDGIRALRK) is sigma-70 factor domain-4. A DNA-binding region (H-T-H motif) is located at residues 164–183 (YAQVADRLAANLATIKSRMR).

The protein belongs to the sigma-70 factor family. ECF subfamily. As to quaternary structure, interacts transiently with the RNA polymerase catalytic core formed by RpoA, RpoB, RpoC and RpoZ (2 alpha, 1 beta, 1 beta' and 1 omega subunit) to form the RNA polymerase holoenzyme that can initiate transcription. Interacts (via sigma-70 factor domain 4) with anti-sigma-K factor RskA.

Its function is as follows. Sigma factors are initiation factors that promote the attachment of RNA polymerase to specific initiation sites and are then released. Extracytoplasmic function (ECF) sigma factors are held in an inactive form by an anti-sigma factor until released by regulated intramembrane proteolysis. This chain is ECF RNA polymerase sigma factor SigK (sigK), found in Mycolicibacterium vanbaalenii (strain DSM 7251 / JCM 13017 / BCRC 16820 / KCTC 9966 / NRRL B-24157 / PYR-1) (Mycobacterium vanbaalenii).